We begin with the raw amino-acid sequence, 130 residues long: Small ribosomal subunit protein uS9 (130 aa).

Residues 102–130 (GFLTRDPRMKERKKYGLKKARRSPQFSKR) are disordered. A compositionally biased stretch (basic residues) spans 111 to 130 (KERKKYGLKKARRSPQFSKR).

Belongs to the universal ribosomal protein uS9 family.

The polypeptide is Small ribosomal subunit protein uS9 (Clostridium botulinum (strain ATCC 19397 / Type A)).